Consider the following 161-residue polypeptide: Nucleotide-binding protein XCV3791 (161 aa).

This sequence belongs to the YajQ family.

In terms of biological role, nucleotide-binding protein. This is Nucleotide-binding protein XCV3791 from Xanthomonas euvesicatoria pv. vesicatoria (strain 85-10) (Xanthomonas campestris pv. vesicatoria).